Consider the following 570-residue polypeptide: MSEKHPGPLVVEGKLTDAERMKLESNYLRGTIAEDLNDGLTGGFKGDNFLLIRFHGMYQQDDRDIRAERAAQKLEPRHAMLLRCRLPGGVITTTQWKAIDKFAADNTIYGSIRLTNRQTFQFHGILKKNVKPVHQMLHSVGLDALATANDMNRNVLCTSNPYESQLHAEAYEWAKKISEHLLPRTRAYAEIWLDQKKVATTDEEPILGQTYLPRKFKTTVVIPPQNDIDLHANDMNFVAIAENGKLVGFNLLVGGGLSIEHGNKKTYARTASEFGYLPLEHTLAVAEAVVTTQRDWGNRTDRKNAKTKYTLERVGVETFKAEVERRAGIKFEPIRPYEFTGRGDRIGWVKGIDDKWHLTLFIENGRILDYPGRPLKTGLLEIAKIHKGEFRITANQNLIVASVPEDQKARIEKLARDHGLMNAVTPQRENSMACVSFPTCPLAMAEAERFLPSFIDKVEGVMNKHGVSDEHIVTRVTGCPNGCGRAMLAEVGLVGKAPGRYNLHLGGNRSGTRIPRMYRENITESEILDSLDELVGRWAKEREAGEGFGDFTVRAGIIRPVLDPARDFWE.

[4Fe-4S] cluster-binding residues include cysteine 434, cysteine 440, cysteine 479, and cysteine 483. Siroheme is bound at residue cysteine 483.

Belongs to the nitrite and sulfite reductase 4Fe-4S domain family. In terms of assembly, alpha(8)-beta(8). The alpha component is a flavoprotein, the beta component is a hemoprotein. It depends on siroheme as a cofactor. Requires [4Fe-4S] cluster as cofactor.

The enzyme catalyses hydrogen sulfide + 3 NADP(+) + 3 H2O = sulfite + 3 NADPH + 4 H(+). It participates in sulfur metabolism; hydrogen sulfide biosynthesis; hydrogen sulfide from sulfite (NADPH route): step 1/1. Its function is as follows. Component of the sulfite reductase complex that catalyzes the 6-electron reduction of sulfite to sulfide. This is one of several activities required for the biosynthesis of L-cysteine from sulfate. In Klebsiella pneumoniae (strain 342), this protein is Sulfite reductase [NADPH] hemoprotein beta-component 1.